Reading from the N-terminus, the 350-residue chain is Holliday junction branch migration complex subunit RuvB (350 aa).

A disordered region spans residues 1 to 20 (MIEADRLITASPREREEQQD). Residues 4 to 184 (ADRLITASPR…FGIVQRLEFY (181 aa)) form a large ATPase domain (RuvB-L) region. ATP is bound by residues Ile-23, Arg-24, Gly-65, Lys-68, Thr-69, Thr-70, 131–133 (EDF), Arg-174, Tyr-184, and Arg-221. Thr-69 is a Mg(2+) binding site. The interval 185–255 (GIDDLATIVT…IADQALNLLD (71 aa)) is small ATPAse domain (RuvB-S). The head domain (RuvB-H) stretch occupies residues 258–350 (ERGFDHSDRR…SGDLFAVSDE (93 aa)). 3 residues coordinate DNA: Arg-294, Arg-313, and Arg-318.

This sequence belongs to the RuvB family. In terms of assembly, homohexamer. Forms an RuvA(8)-RuvB(12)-Holliday junction (HJ) complex. HJ DNA is sandwiched between 2 RuvA tetramers; dsDNA enters through RuvA and exits via RuvB. An RuvB hexamer assembles on each DNA strand where it exits the tetramer. Each RuvB hexamer is contacted by two RuvA subunits (via domain III) on 2 adjacent RuvB subunits; this complex drives branch migration. In the full resolvosome a probable DNA-RuvA(4)-RuvB(12)-RuvC(2) complex forms which resolves the HJ.

It localises to the cytoplasm. It catalyses the reaction ATP + H2O = ADP + phosphate + H(+). Functionally, the RuvA-RuvB-RuvC complex processes Holliday junction (HJ) DNA during genetic recombination and DNA repair, while the RuvA-RuvB complex plays an important role in the rescue of blocked DNA replication forks via replication fork reversal (RFR). RuvA specifically binds to HJ cruciform DNA, conferring on it an open structure. The RuvB hexamer acts as an ATP-dependent pump, pulling dsDNA into and through the RuvAB complex. RuvB forms 2 homohexamers on either side of HJ DNA bound by 1 or 2 RuvA tetramers; 4 subunits per hexamer contact DNA at a time. Coordinated motions by a converter formed by DNA-disengaged RuvB subunits stimulates ATP hydrolysis and nucleotide exchange. Immobilization of the converter enables RuvB to convert the ATP-contained energy into a lever motion, pulling 2 nucleotides of DNA out of the RuvA tetramer per ATP hydrolyzed, thus driving DNA branch migration. The RuvB motors rotate together with the DNA substrate, which together with the progressing nucleotide cycle form the mechanistic basis for DNA recombination by continuous HJ branch migration. Branch migration allows RuvC to scan DNA until it finds its consensus sequence, where it cleaves and resolves cruciform DNA. The polypeptide is Holliday junction branch migration complex subunit RuvB (Ectopseudomonas mendocina (strain ymp) (Pseudomonas mendocina)).